The sequence spans 368 residues: Chaperone protein DnaJ (368 aa).

In terms of domain architecture, J spans 5 to 69; that stretch reads DYYEVLGVAR…NQRARYDQFG (65 aa). The CR-type zinc finger occupies 125 to 207; sequence GVEKVITIPV…CRGAGRVRKN (83 aa). Zn(2+) is bound by residues Cys138, Cys141, Cys155, Cys158, Cys181, Cys184, Cys195, and Cys198. CXXCXGXG motif repeat units follow at residues 138-145, 155-162, 181-188, and 195-202; these read CGTCHGSG, CKRCGGSG, CSTCHGRG, and CETCRGAG.

Belongs to the DnaJ family. As to quaternary structure, homodimer. Zn(2+) is required as a cofactor.

The protein localises to the cytoplasm. Functionally, participates actively in the response to hyperosmotic and heat shock by preventing the aggregation of stress-denatured proteins and by disaggregating proteins, also in an autonomous, DnaK-independent fashion. Unfolded proteins bind initially to DnaJ; upon interaction with the DnaJ-bound protein, DnaK hydrolyzes its bound ATP, resulting in the formation of a stable complex. GrpE releases ADP from DnaK; ATP binding to DnaK triggers the release of the substrate protein, thus completing the reaction cycle. Several rounds of ATP-dependent interactions between DnaJ, DnaK and GrpE are required for fully efficient folding. Also involved, together with DnaK and GrpE, in the DNA replication of plasmids through activation of initiation proteins. The polypeptide is Chaperone protein DnaJ (Exiguobacterium sibiricum (strain DSM 17290 / CCUG 55495 / CIP 109462 / JCM 13490 / 255-15)).